A 715-amino-acid polypeptide reads, in one-letter code: Discoidin, CUB and LCCL domain-containing protein 1 (715 aa).

The first 34 residues, 1 to 34 (MVPGARGGGALARAAGRGLLALLLAVSAPLRLQA), serve as a signal peptide directing secretion. Over 35–459 (EELGDGCGHL…TSTGINITTV (425 aa)) the chain is Extracellular. 2 cysteine pairs are disulfide-bonded: C41–C68 and C94–C112. One can recognise a CUB domain in the interval 41 to 150 (CGHLVTYQDS…RGFLLTYASS (110 aa)). N-linked (GlcNAc...) asparagine glycosylation occurs at N64. N124 carries an N-linked (GlcNAc...) asparagine glycan. Residues 152-248 (HPDLITCLER…RDGSLSDKRF (97 aa)) form the LCCL domain. 2 cysteine pairs are disulfide-bonded: C158/C174 and C178/C200. The F5/8 type C domain occupies 248–412 (FLFTSNGCSR…IALKVELIGC (165 aa)). N277 is a glycosylation site (N-linked (GlcNAc...) asparagine). Positions 278–312 (ESGDQVHWSPGQARLQDQGPSWASGDSSNNHKPRE) are disordered. The span at 295–307 (QGPSWASGDSSNN) shows a compositional bias: polar residues. 3 N-linked (GlcNAc...) asparagine glycosylation sites follow: N351, N418, and N455. The helical transmembrane segment at 460–480 (AIPLVLLVVLVFAGMGIFAAF) threads the bilayer. The Cytoplasmic portion of the chain corresponds to 481–715 (RKKKKKGSPY…LNQTAMTALL (235 aa)). Position 513 is a phosphoserine (S513). T614 carries the phosphothreonine modification. Residues 619 to 702 (SGYRVPGPQP…SDSYSAPRDC (84 aa)) are disordered.

The protein resides in the membrane. The chain is Discoidin, CUB and LCCL domain-containing protein 1 (DCBLD1) from Homo sapiens (Human).